The primary structure comprises 390 residues: S-adenosylmethionine synthase 4 (390 aa).

Position 9 (E9) interacts with Mg(2+). H15 is a binding site for ATP. E43 is a K(+) binding site. L-methionine-binding residues include E56 and Q99. Residues 167 to 169 (DGK), 235 to 238 (SGRF), D246, 252 to 253 (RK), A269, K273, and K277 contribute to the ATP site. Residue D246 participates in L-methionine binding. Residue K277 participates in L-methionine binding.

Belongs to the AdoMet synthase family. In terms of assembly, homotetramer. The cofactor is Mn(2+). It depends on Mg(2+) as a cofactor. Co(2+) serves as cofactor. Requires K(+) as cofactor. In terms of tissue distribution, mostly expressed in flowers, seedpods and roots, and, to a lower extent, in stems and leaves.

The protein localises to the cytoplasm. The enzyme catalyses L-methionine + ATP + H2O = S-adenosyl-L-methionine + phosphate + diphosphate. It functions in the pathway amino-acid biosynthesis; S-adenosyl-L-methionine biosynthesis; S-adenosyl-L-methionine from L-methionine: step 1/1. In terms of biological role, catalyzes the formation of S-adenosylmethionine from methionine and ATP. The reaction comprises two steps that are both catalyzed by the same enzyme: formation of S-adenosylmethionine (AdoMet) and triphosphate, and subsequent hydrolysis of the triphosphate. This Brassica juncea (Indian mustard) protein is S-adenosylmethionine synthase 4 (MSAMS4).